The chain runs to 452 residues: tRNA pseudouridine synthase Pus10 (452 aa).

The region spanning 71-200 (EMLRALAPSC…DGHVEIQIQP (130 aa)) is the THUMP domain. Asp-269 serves as the catalytic Nucleophile. Substrate-binding residues include Tyr-335 and Tyr-406.

This sequence belongs to the pseudouridine synthase Pus10 family.

The enzyme catalyses uridine(54) in tRNA = pseudouridine(54) in tRNA. The catalysed reaction is uridine(55) in tRNA = pseudouridine(55) in tRNA. In terms of biological role, responsible for synthesis of pseudouridine from uracil-54 and uracil-55 in the psi GC loop of transfer RNAs. The protein is tRNA pseudouridine synthase Pus10 of Methanothrix thermoacetophila (strain DSM 6194 / JCM 14653 / NBRC 101360 / PT) (Methanosaeta thermophila).